The primary structure comprises 177 residues: CRIB domain-containing protein RIC8 (177 aa).

In terms of domain architecture, CRIB spans 17–30 (IGTPTDVKHVAHIG). A compositionally biased stretch (basic and acidic residues) spans 72-89 (STRSRDIPRLPKSSRERS). The disordered stretch occupies residues 72–177 (STRSRDIPRL…SSTSDAGYLT (106 aa)). Low complexity predominate over residues 158 to 171 (GSQVESISDSSSTS).

Functions as a downstream effector of Rho-related GTP binding proteins of the 'Rho of Plants' (ROPs) family. Participates in the propagation of ROP GTPase signals in specific cellular responses. In Arabidopsis thaliana (Mouse-ear cress), this protein is CRIB domain-containing protein RIC8 (RIC8).